We begin with the raw amino-acid sequence, 308 residues long: uncharacterized protein (308 aa).

The tract at residues 19–43 (EPQASGAGPAQTPPPVTVPMTPPSK) is disordered. Over residues 29-43 (QTPPPVTVPMTPPSK) the composition is skewed to pro residues.

This is an uncharacterized protein from Deinococcus radiodurans (strain ATCC 13939 / DSM 20539 / JCM 16871 / CCUG 27074 / LMG 4051 / NBRC 15346 / NCIMB 9279 / VKM B-1422 / R1).